We begin with the raw amino-acid sequence, 199 residues long: Peptidyl-tRNA hydrolase (199 aa).

TRNA is bound at residue Y18. The active-site Proton acceptor is H23. TRNA contacts are provided by Y72, N74, and N120.

Belongs to the PTH family. In terms of assembly, monomer.

The protein localises to the cytoplasm. It catalyses the reaction an N-acyl-L-alpha-aminoacyl-tRNA + H2O = an N-acyl-L-amino acid + a tRNA + H(+). Functionally, hydrolyzes ribosome-free peptidyl-tRNAs (with 1 or more amino acids incorporated), which drop off the ribosome during protein synthesis, or as a result of ribosome stalling. Catalyzes the release of premature peptidyl moieties from peptidyl-tRNA molecules trapped in stalled 50S ribosomal subunits, and thus maintains levels of free tRNAs and 50S ribosomes. The chain is Peptidyl-tRNA hydrolase from Bifidobacterium longum (strain DJO10A).